The chain runs to 52 residues: Large ribosomal subunit protein bL33 (52 aa).

This sequence belongs to the bacterial ribosomal protein bL33 family.

The chain is Large ribosomal subunit protein bL33 from Campylobacter jejuni subsp. doylei (strain ATCC BAA-1458 / RM4099 / 269.97).